Here is a 666-residue protein sequence, read N- to C-terminus: Peptidase S41 family protein phomP1 (666 aa).

The first 27 residues, 1 to 27, serve as a signal peptide directing secretion; sequence MSSFLVQTAVVRLFLLGVVFWFPFALS. N-linked (GlcNAc...) asparagine glycosylation is found at Asn-70, Asn-214, and Asn-234. A peptidase S41 domain region spans residues 303 to 504; it reads DVAVLQITSF…LLQAQGVRTV (202 aa). 2 N-linked (GlcNAc...) asparagine glycosylation sites follow: Asn-555 and Asn-612.

Belongs to the peptidase S41A family.

It participates in mycotoxin biosynthesis. Peptidase S41 family protein; part of the gene cluster that mediates the biosynthesis of the phomopsins, a group of hexapeptide mycotoxins which infects lupins and causes lupinosis disease in livestock. Within the pathway, phomP1 and phomP1' are probably involved in the processing of the phomA and phomA' precursors. The pathway starts with the processing of the precursor phomA by several endopeptidases including kexin proteases as well as the cluster-specific S41 family peptidase phomP1 and the oligopeptidase phomG to produce 10 identical copies of the hexapeptide Tyr-Val-Ile-Pro-Ile-Asp. After being excised from the precursor peptide, the core peptides are cyclized and modified post-translationally by enzymes encoded within the gene cluster. The timing and order of proteolysis of the phomA precursor and PTMs are still unknown. Two tyrosinase-like enzymes, phomQ1 and phomQ2, catalyze the chlorination and hydroxylation of Tyr, respectively. PhomYb, is proposed to be involved in the construction of the macrocyclic structure. The other 4 ustYa family proteins may be involved in PTMs that generate the unique structure of phomopsin A. PhomYa is required for the hydroxylation of C-beta of Tyr. PhomYc, phomYd, and phomYe are responsible for the biosynthesis of 2,3-dehydroisoleucine (dIle), 2,3-dehydroaspartic acid (dAsp), and 3,4-dehydroproline (dPro), respectively. While dIle formation by phomYc is indispensable for the installation of dAsp by phomYd, the order of the other PTMs have not been elucidated yet. Most of the biosynthetic enzymes likely have broad substrate specificity, and thus, there might be a metabolic grid from a precursor to phomopsin A. The enzyme(s) responsible for the biosynthesis of 3,4-dehydrovaline (dVal) have also not been identified yet. Finally, phomM acts as an S-adenosylmethionine-dependent alpha-N-methyltransferase that catalyzes two successive N-methylation reactions, converting N-desmethyl-phomopsin A to phomopsin A and phomopsin A further to an N,N-dimethylated congener called phomopsin E. The chain is Peptidase S41 family protein phomP1 from Diaporthe leptostromiformis (Lupinosis disease fungus).